A 153-amino-acid chain; its full sequence is Histone H2A.Z-specific chaperone CHZ1 (153 aa).

A compositionally biased stretch (basic and acidic residues) spans 1–29 (MSDEAKEKRELESQKESSHNKSEKSVEPK). A disordered region spans residues 1-153 (MSDEAKEKRE…EDEEDDDFKE (153 aa)). Ser-2 bears the N-acetylserine mark. The segment covering 56–65 (LTKSENNGTV) has biased composition (polar residues). Ser-68 and Ser-70 each carry phosphoserine. Over residues 84 to 94 (EGEEEEDDLAE) the composition is skewed to acidic residues. Positions 87–108 (EEEDDLAEIDTSNIITSGRRTR) are important for H2A.Z-H2B binding. A compositionally biased stretch (basic and acidic residues) spans 110 to 138 (KVIDYKKTAEELDKKEPSTGSKDDVGYGE). The segment covering 139–153 (KEEDDEDEEDDDFKE) has biased composition (acidic residues).

This sequence belongs to the CHZ1 family. Forms a heterotrimer with H2A.Z-H2B, stabilizing the association of the histone dimer. Also, with a lower affinity, forms a heterotrimer with H2A-H2B.

Its subcellular location is the nucleus. Functionally, forms a chaperone-bound H2A.Z-H2B complex that acts as a source for SWR1 complex-dependent H2A to H2A.Z histone replacement in chromatin. The sequence is that of Histone H2A.Z-specific chaperone CHZ1 (CHZ1) from Saccharomyces cerevisiae (strain ATCC 204508 / S288c) (Baker's yeast).